We begin with the raw amino-acid sequence, 156 residues long: MRLQLIAIGTKMPDWVQTGFSDYLKRFPKDLPFDLTEIAAGKRGKNADIARILDKEGEQMLAAVAKGNRIVTLDIPGARWETPRLAQQLERWKQDGRDVSFLIGGPEGLAPACKAGAEQSWSLSPLTLPHPLVRVLVAESLYRAWSITTNHPYHRE.

S-adenosyl-L-methionine is bound by residues Leu-73, Gly-104, and 123-128 (LSPLTL).

It belongs to the RNA methyltransferase RlmH family. In terms of assembly, homodimer.

The protein resides in the cytoplasm. The enzyme catalyses pseudouridine(1915) in 23S rRNA + S-adenosyl-L-methionine = N(3)-methylpseudouridine(1915) in 23S rRNA + S-adenosyl-L-homocysteine + H(+). In terms of biological role, specifically methylates the pseudouridine at position 1915 (m3Psi1915) in 23S rRNA. This Sodalis glossinidius (strain morsitans) protein is Ribosomal RNA large subunit methyltransferase H.